Reading from the N-terminus, the 199-residue chain is Glycerol-3-phosphate acyltransferase (199 aa).

5 helical membrane-spanning segments follow: residues 5–25, 51–71, 79–99, 112–132, and 153–173; these read AFLVLTYLLGAFPFGLVVALV, KLGVLTLVLDLAKGLVPVLCA, VFLSMVAVAAVVGHMYSVFLY, VFLGGAPIPALLSVAVCVAVI, and CAWLGPVFLVPAAAIIGGLVI.

Belongs to the PlsY family. As to quaternary structure, probably interacts with PlsX.

Its subcellular location is the cell inner membrane. It catalyses the reaction an acyl phosphate + sn-glycerol 3-phosphate = a 1-acyl-sn-glycero-3-phosphate + phosphate. The protein operates within lipid metabolism; phospholipid metabolism. Functionally, catalyzes the transfer of an acyl group from acyl-phosphate (acyl-PO(4)) to glycerol-3-phosphate (G3P) to form lysophosphatidic acid (LPA). This enzyme utilizes acyl-phosphate as fatty acyl donor, but not acyl-CoA or acyl-ACP. The polypeptide is Glycerol-3-phosphate acyltransferase (Solidesulfovibrio magneticus (strain ATCC 700980 / DSM 13731 / RS-1) (Desulfovibrio magneticus)).